Here is a 36-residue protein sequence, read N- to C-terminus: Photosystem I reaction center subunit VIII (36 aa).

The chain crosses the membrane as a helical span at residues 8 to 28; sequence SIFVPLVGLVFPAIAIASLFL.

It belongs to the PsaI family.

The protein localises to the plastid. Its subcellular location is the chloroplast thylakoid membrane. May help in the organization of the PsaL subunit. In Jasminum nudiflorum (Winter jasmine), this protein is Photosystem I reaction center subunit VIII.